Consider the following 457-residue polypeptide: Putative purine-cytosine permease YxlA (457 aa).

12 helical membrane passes run 24–44, 50–70, 90–110, 127–147, 164–184, 192–212, 228–248, 264–284, 316–336, 341–361, 392–412, and 420–440; these read FPVW…TIPV, LFWS…FMAS, FGVI…LGFF, IPGS…TIFG, AVFF…GSWI, IFLV…PYVA, FWYS…LGAL, IVQL…FGQM, IIMI…GQSN, FLNF…INLV, IAFV…FYIG, and GGDI…YVLM.

The protein belongs to the purine-cytosine permease (2.A.39) family.

It localises to the cell membrane. This chain is Putative purine-cytosine permease YxlA (yxlA), found in Bacillus subtilis (strain 168).